The chain runs to 424 residues: MASKEVLEDTVEERVISEEYKIWKKNTPFLYDLVMTHALEWPSLTVQWLPDVSRPEGKDYALHWLVLGTHTSDEQNHLVVARVQIPNDDQFDTSQYDSEKGEFGGFGSVTGKIETEIKINHEGEVNRARYMPQNPYIIATKTPSADVLVFDYTKHPSKPDPSGECNPDLRLRGHQKEGYGLSWNSNLKGHLLSASDDHTVCLWDISAGPKEGKIVDAKAIFTGHSAVVEDVAWHLLHESLFGSVADDQKLMIWDTRSNTTSKPSHSVDAHTAEVNCLSFNPYSEFILATGSADKTVALWDLRNLKLKLHSFESHKDEIFQVHWSPHNETILASSGTDRRLNVWDLSKIGEEQSAEDAEDGPPELLFIHGGHTAKISDFSWNPNEPWVICSVSEDNIMQIWQMAENIYNDEEPDIAAAELEGQGT.

WD repeat units lie at residues 47–121 (QWLP…KINH), 127–172 (RARY…LRLR), 180–216 (GLSW…KIVD), 227–268 (VVED…HSVD), 274–311 (VNCL…LHSF), 317–368 (EIFQ…LFIH), and 375–402 (ISDF…IWQM). The interaction with HAT1 stretch occupies residues 359–404 (DGPPELLFIHGGHTAKISDFSWNPNEPWVICSVSEDNIMQIWQMAE).

The protein belongs to the WD repeat RBAP46/RBAP48/MSI1 family. As to quaternary structure, binds directly to helix 1 of the histone fold of histone H4, a region that is not accessible when H4 is in chromatin. Also interacts with histone H2B and HAT1.

Its subcellular location is the nucleus. Functionally, core histone-binding subunit that may target chromatin remodeling factors, histone acetyltransferases and histone deacetylases to their histone substrates in a manner that is regulated by nucleosomal DNA. Component of several complexes which regulate chromatin metabolism. This chain is Histone-binding protein RBBP7 (RBBP7), found in Gallus gallus (Chicken).